Here is a 345-residue protein sequence, read N- to C-terminus: Golgi-associated RAB2 interactor protein 1B (345 aa).

Disordered regions lie at residues 222–241 (CSPSGDSQLVQKKPQASQPS) and 271–299 (SRSSKKTENKKDSSGKKTSPSEDSIPCTR). Residues 275-285 (KKTENKKDSSG) are compositionally biased toward basic and acidic residues.

It belongs to the GARIN family.

It localises to the golgi apparatus. Functionally, RAB2B effector protein required for accurate acrosome formation and normal male fertility. In complex with RAB2A/RAB2B, seems to suppress excessive vesicle trafficking during acrosome formation. This Bos taurus (Bovine) protein is Golgi-associated RAB2 interactor protein 1B (GARIN1B).